The following is a 329-amino-acid chain: Sideroflexin-1.1 (329 aa).

Helical transmembrane passes span 100–122 (MPGN…GVVF), 150–167 (LFVS…VALG), 178–198 (LAAR…NIPM), 232–254 (VTLS…MNRI), and 274–294 (IQTL…CALF).

The protein belongs to the sideroflexin family.

The protein localises to the mitochondrion inner membrane. It catalyses the reaction L-serine(in) = L-serine(out). The enzyme catalyses L-alanine(in) = L-alanine(out). It carries out the reaction L-cysteine(in) = L-cysteine(out). In terms of biological role, amino acid transporter importing serine, an essential substrate of the mitochondrial branch of the one-carbon pathway, into mitochondria. Mitochondrial serine is then converted to glycine and formate, which exits to the cytosol where it is used to generate the charged folates that serve as one-carbon donors. May also transport other amino acids including alanine and cysteine. The sequence is that of Sideroflexin-1.1 from Caenorhabditis elegans.